Here is a 289-residue protein sequence, read N- to C-terminus: Oxygen-dependent coproporphyrinogen-III oxidase (289 aa).

S82 provides a ligand contact to substrate. A divalent metal cation contacts are provided by H86 and H96. The Proton donor role is filled by H96. 98–100 contributes to the substrate binding site; it reads NYR. The a divalent metal cation site is built by H130 and H160. The important for dimerization stretch occupies residues 224 to 259; the sequence is YVEFNLVWDRGTIFGLQTNGRIESILMSMPPLVRWE.

Belongs to the aerobic coproporphyrinogen-III oxidase family. Homodimer. It depends on a divalent metal cation as a cofactor.

It localises to the cytoplasm. The catalysed reaction is coproporphyrinogen III + O2 + 2 H(+) = protoporphyrinogen IX + 2 CO2 + 2 H2O. It participates in porphyrin-containing compound metabolism; protoporphyrin-IX biosynthesis; protoporphyrinogen-IX from coproporphyrinogen-III (O2 route): step 1/1. Its function is as follows. Involved in the heme and chlorophyll biosynthesis. Catalyzes the aerobic oxidative decarboxylation of propionate groups of rings A and B of coproporphyrinogen-III to yield the vinyl groups in protoporphyrinogen-IX. The sequence is that of Oxygen-dependent coproporphyrinogen-III oxidase from Gloeobacter violaceus (strain ATCC 29082 / PCC 7421).